A 226-amino-acid chain; its full sequence is UPF0173 metal-dependent hydrolase Msed_2125 (226 aa).

It belongs to the UPF0173 family.

The polypeptide is UPF0173 metal-dependent hydrolase Msed_2125 (Metallosphaera sedula (strain ATCC 51363 / DSM 5348 / JCM 9185 / NBRC 15509 / TH2)).